The sequence spans 141 residues: MKGAKSKAETRSTKLSVTKKPAKGAKGAAKDPNKPKRPSSAFFVFMEDFRVTYKEEHPKNKSVAAVGKAGGEKWKSLSDSEKAPYVAKADKRKVEYEKNMKAYNKKLEEGPKEDEESDKSVSEVNDEDDAEDGSEEEEDDD.

Basic and acidic residues-rich tracts occupy residues 1–12 (MKGAKSKAETRS) and 70–110 (GGEK…LEEG). 2 disordered regions span residues 1-40 (MKGA…RPSS) and 54-141 (KEEH…EDDD). A DNA-binding region (HMG box) is located at residues 35-104 (PKRPSSAFFV…EYEKNMKAYN (70 aa)). S122 carries the post-translational modification Phosphoserine. Acidic residues predominate over residues 124–141 (VNDEDDAEDGSEEEEDDD).

The protein belongs to the HMGB family. In terms of tissue distribution, expressed in lateral roots, root tips, stems, cotyledons, leaves and flowers (excluding ovary and pedicels).

It localises to the nucleus. The protein localises to the cytoplasm. It is found in the cytosol. Binds preferentially double-stranded DNA. In Arabidopsis thaliana (Mouse-ear cress), this protein is High mobility group B protein 3 (HMGB3).